Here is a 343-residue protein sequence, read N- to C-terminus: Probable dual-specificity RNA methyltransferase RlmN (343 aa).

Catalysis depends on E91, which acts as the Proton acceptor. A Radical SAM core domain is found at 97–326; that stretch reads HPDRITACIS…AEIRREKGTD (230 aa). Cysteines 104 and 331 form a disulfide. [4Fe-4S] cluster is bound by residues C111, C115, and C118. S-adenosyl-L-methionine contacts are provided by residues 158-159, S190, 213-215, and N289; these read GE and SLH. C331 acts as the S-methylcysteine intermediate in catalysis.

It belongs to the radical SAM superfamily. RlmN family. The cofactor is [4Fe-4S] cluster.

It localises to the cytoplasm. It carries out the reaction adenosine(2503) in 23S rRNA + 2 reduced [2Fe-2S]-[ferredoxin] + 2 S-adenosyl-L-methionine = 2-methyladenosine(2503) in 23S rRNA + 5'-deoxyadenosine + L-methionine + 2 oxidized [2Fe-2S]-[ferredoxin] + S-adenosyl-L-homocysteine. The enzyme catalyses adenosine(37) in tRNA + 2 reduced [2Fe-2S]-[ferredoxin] + 2 S-adenosyl-L-methionine = 2-methyladenosine(37) in tRNA + 5'-deoxyadenosine + L-methionine + 2 oxidized [2Fe-2S]-[ferredoxin] + S-adenosyl-L-homocysteine. Its function is as follows. Specifically methylates position 2 of adenine 2503 in 23S rRNA and position 2 of adenine 37 in tRNAs. The protein is Probable dual-specificity RNA methyltransferase RlmN of Thermotoga maritima (strain ATCC 43589 / DSM 3109 / JCM 10099 / NBRC 100826 / MSB8).